The chain runs to 774 residues: 5-methyltetrahydropteroyltriglutamate--homocysteine methyltransferase (774 aa).

5-methyltetrahydropteroyltri-L-glutamate-binding positions include 23–26 (RELK) and lysine 123. Residues 446-448 (IGS) and glutamate 499 each bind L-homocysteine. Residues 446–448 (IGS) and glutamate 499 each bind L-methionine. 5-methyltetrahydropteroyltri-L-glutamate is bound by residues 530 to 531 (RC) and tryptophan 576. Aspartate 614 is a binding site for L-homocysteine. Aspartate 614 is an L-methionine binding site. Glutamate 620 is a binding site for 5-methyltetrahydropteroyltri-L-glutamate. Zn(2+) is bound by residues histidine 656, cysteine 658, and glutamate 680. Histidine 709 functions as the Proton donor in the catalytic mechanism. Zn(2+) is bound at residue cysteine 741.

Belongs to the vitamin-B12 independent methionine synthase family. Requires Zn(2+) as cofactor.

The catalysed reaction is 5-methyltetrahydropteroyltri-L-glutamate + L-homocysteine = tetrahydropteroyltri-L-glutamate + L-methionine. The protein operates within amino-acid biosynthesis; L-methionine biosynthesis via de novo pathway; L-methionine from L-homocysteine (MetE route): step 1/1. Catalyzes the transfer of a methyl group from 5-methyltetrahydrofolate to homocysteine resulting in methionine formation. The polypeptide is 5-methyltetrahydropteroyltriglutamate--homocysteine methyltransferase (Aliivibrio fischeri (strain MJ11) (Vibrio fischeri)).